We begin with the raw amino-acid sequence, 255 residues long: Adenosylcobinamide-GDP ribazoletransferase (255 aa).

6 helical membrane-spanning segments follow: residues 24 to 44 (LIAY…SLYV), 45 to 65 (AIYG…IYIV), 98 to 118 (VGAG…ISLS), 122 to 142 (LYIG…MMMI), 164 to 184 (KHDS…ALLS), and 187 to 207 (SIMI…MAVI).

Belongs to the CobS family. Requires Mg(2+) as cofactor.

It is found in the cell membrane. The catalysed reaction is alpha-ribazole + adenosylcob(III)inamide-GDP = adenosylcob(III)alamin + GMP + H(+). The enzyme catalyses alpha-ribazole 5'-phosphate + adenosylcob(III)inamide-GDP = adenosylcob(III)alamin 5'-phosphate + GMP + H(+). Its pathway is cofactor biosynthesis; adenosylcobalamin biosynthesis; adenosylcobalamin from cob(II)yrinate a,c-diamide: step 7/7. Its function is as follows. Joins adenosylcobinamide-GDP and alpha-ribazole to generate adenosylcobalamin (Ado-cobalamin). Also synthesizes adenosylcobalamin 5'-phosphate from adenosylcobinamide-GDP and alpha-ribazole 5'-phosphate. The sequence is that of Adenosylcobinamide-GDP ribazoletransferase from Thermoplasma acidophilum (strain ATCC 25905 / DSM 1728 / JCM 9062 / NBRC 15155 / AMRC-C165).